The chain runs to 469 residues: tRNA(Ile)-lysidine synthase (469 aa).

26–31 provides a ligand contact to ATP; the sequence is SGGPDS.

It belongs to the tRNA(Ile)-lysidine synthase family.

The protein localises to the cytoplasm. It catalyses the reaction cytidine(34) in tRNA(Ile2) + L-lysine + ATP = lysidine(34) in tRNA(Ile2) + AMP + diphosphate + H(+). In terms of biological role, ligates lysine onto the cytidine present at position 34 of the AUA codon-specific tRNA(Ile) that contains the anticodon CAU, in an ATP-dependent manner. Cytidine is converted to lysidine, thus changing the amino acid specificity of the tRNA from methionine to isoleucine. The sequence is that of tRNA(Ile)-lysidine synthase from Clostridium perfringens (strain ATCC 13124 / DSM 756 / JCM 1290 / NCIMB 6125 / NCTC 8237 / Type A).